The primary structure comprises 291 residues: ATP synthase gamma chain (291 aa).

Belongs to the ATPase gamma chain family. F-type ATPases have 2 components, CF(1) - the catalytic core - and CF(0) - the membrane proton channel. CF(1) has five subunits: alpha(3), beta(3), gamma(1), delta(1), epsilon(1). CF(0) has three main subunits: a, b and c.

It localises to the cell inner membrane. In terms of biological role, produces ATP from ADP in the presence of a proton gradient across the membrane. The gamma chain is believed to be important in regulating ATPase activity and the flow of protons through the CF(0) complex. This is ATP synthase gamma chain from Sulfurihydrogenibium sp. (strain YO3AOP1).